A 317-amino-acid chain; its full sequence is Beta-ketoacyl-[acyl-carrier-protein] synthase III (317 aa).

Active-site residues include C112 and H244. Residues 245-249 (QANLR) are ACP-binding. N274 is a catalytic residue.

Belongs to the thiolase-like superfamily. FabH family. In terms of assembly, homodimer.

Its subcellular location is the cytoplasm. It catalyses the reaction malonyl-[ACP] + acetyl-CoA + H(+) = 3-oxobutanoyl-[ACP] + CO2 + CoA. The protein operates within lipid metabolism; fatty acid biosynthesis. Catalyzes the condensation reaction of fatty acid synthesis by the addition to an acyl acceptor of two carbons from malonyl-ACP. Catalyzes the first condensation reaction which initiates fatty acid synthesis and may therefore play a role in governing the total rate of fatty acid production. Possesses both acetoacetyl-ACP synthase and acetyl transacylase activities. Its substrate specificity determines the biosynthesis of branched-chain and/or straight-chain of fatty acids. The chain is Beta-ketoacyl-[acyl-carrier-protein] synthase III from Shigella boydii serotype 4 (strain Sb227).